The sequence spans 256 residues: uncharacterized protein (256 aa).

The disordered stretch occupies residues 211–256 (RKLQASVTTTPPKRCKLADRPAQTTQDTPRAPQPAPVRAQRPLFTL). Low complexity predominate over residues 246–256 (PVRAQRPLFTL).

This is an uncharacterized protein from Orgyia pseudotsugata (Douglas-fir tussock moth).